Here is a 180-residue protein sequence, read N- to C-terminus: ATP-dependent protease subunit HslV (180 aa).

T7 is an active-site residue. Residues G165, C168, and T171 each coordinate Na(+).

The protein belongs to the peptidase T1B family. HslV subfamily. In terms of assembly, a double ring-shaped homohexamer of HslV is capped on each side by a ring-shaped HslU homohexamer. The assembly of the HslU/HslV complex is dependent on binding of ATP.

It localises to the cytoplasm. It carries out the reaction ATP-dependent cleavage of peptide bonds with broad specificity.. Allosterically activated by HslU binding. In terms of biological role, protease subunit of a proteasome-like degradation complex believed to be a general protein degrading machinery. The protein is ATP-dependent protease subunit HslV of Bacillus cereus (strain G9842).